The following is a 165-amino-acid chain: Anaphase-promoting complex subunit 11 (165 aa).

An RING-type; atypical zinc finger spans residues 52-95 (CPSCKFPGDQCPLVIGLCHHNFHDHCIYRWLDTPTSKGLCPMCR).

The APC/C is composed of at least 13 subunits that stay tightly associated throughout the cell cycle: APC1, APC2, APC4, APC5, APC9, APC11, CDC16, CDC23, CDC26, CDC27, DOC1, MND2 and SWM1.

Its pathway is protein modification; protein ubiquitination. Its function is as follows. Probably catalytic subunit of the anaphase promoting complex/cyclosome (APC/C), a cell cycle-regulated E3 ubiquitin-protein ligase complex that controls progression through mitosis and the G1 phase of the cell cycle. The APC/C is thought to confer substrate specificity and, in the presence of ubiquitin-conjugating E2 enzymes, it catalyzes the formation of protein-ubiquitin conjugates that are subsequently degraded by the 26S proteasome. In early mitosis, the APC/C is activated by CDC20 and targets securin PDS1, the B-type cyclin CLB5, and other anaphase inhibitory proteins for proteolysis, thereby triggering the separation of sister chromatids at the metaphase-to-anaphase transition. In late mitosis and in G1, degradation of CLB5 allows activation of the APC/C by CDH1, which is needed to destroy CDC20 and the B-type cyclin CLB2 to allow exit from mitosis and creating the low CDK state necessary for cytokinesis and for reforming prereplicative complexes in G1 prior to another round of replication. APC11 is required to recruit the ubiquitin-conjugating enzyme E2 to the APC/C. The polypeptide is Anaphase-promoting complex subunit 11 (APC11) (Saccharomyces cerevisiae (strain ATCC 204508 / S288c) (Baker's yeast)).